The chain runs to 160 residues: UPF0178 protein PLES_56411 (160 aa).

Belongs to the UPF0178 family.

The sequence is that of UPF0178 protein PLES_56411 from Pseudomonas aeruginosa (strain LESB58).